Consider the following 864-residue polypeptide: Leucine--tRNA ligase (864 aa).

The short motif at Pro42–His52 is the 'HIGH' region element. The short motif at Lys624–Ser628 is the 'KMSKS' region element. Position 627 (Lys627) interacts with ATP.

Belongs to the class-I aminoacyl-tRNA synthetase family.

It localises to the cytoplasm. It catalyses the reaction tRNA(Leu) + L-leucine + ATP = L-leucyl-tRNA(Leu) + AMP + diphosphate. This chain is Leucine--tRNA ligase, found in Burkholderia pseudomallei (strain 1106a).